Reading from the N-terminus, the 416-residue chain is D-amino acid dehydrogenase (416 aa).

Residue 3-17 (ITILGSGVIGVTTAY) participates in FAD binding.

Belongs to the DadA oxidoreductase family. It depends on FAD as a cofactor.

It catalyses the reaction a D-alpha-amino acid + A + H2O = a 2-oxocarboxylate + AH2 + NH4(+). It participates in amino-acid degradation; D-alanine degradation; NH(3) and pyruvate from D-alanine: step 1/1. Oxidative deamination of D-amino acids. This Brucella anthropi (strain ATCC 49188 / DSM 6882 / CCUG 24695 / JCM 21032 / LMG 3331 / NBRC 15819 / NCTC 12168 / Alc 37) (Ochrobactrum anthropi) protein is D-amino acid dehydrogenase.